The chain runs to 330 residues: Type I restriction enzyme MpnII specificity subunit (330 aa).

It belongs to the type-I restriction system S methylase family. The methyltransferase is composed of M and S polypeptides.

The specificity (S) subunit of a type I restriction enzyme; this subunit dictates DNA sequence specificity. The M and S subunits together form a methyltransferase (MTase) that probably methylates A-2 on the top strand and A-3 on the bottom strand of the sequence 5'-GAN(7)TAY-3'. As the bacterial DNA is methylated on this sequence and this is the only type I methylase in the genome, it is probably responsible for all of the methylation on this site in the genome. The R subunit has multiple frameshifts and is probably not expressed in this bacteria. The polypeptide is Type I restriction enzyme MpnII specificity subunit (Mycoplasma pneumoniae (strain ATCC 29342 / M129 / Subtype 1) (Mycoplasmoides pneumoniae)).